Here is a 1260-residue protein sequence, read N- to C-terminus: Neural cell adhesion molecule L1 (1260 aa).

The N-terminal stretch at 1–19 (MVVMLRYVWPLLLCSPCLL) is a signal peptide. The Extracellular segment spans residues 20–1123 (IQIPDEYKGH…VSTTGSFASE (1104 aa)). Ig-like C2-type domains are found at residues 35-130 (PVIT…IQLV), 138-225 (PKET…EPID), 239-327 (PRLL…YYVT), 332-419 (PYWL…AYIY), 424-506 (PARI…NNVT), and 517-600 (TQIT…DEVE). 2 cysteine pairs are disulfide-bonded: Cys-57–Cys-113 and Cys-157–Cys-208. N-linked (GlcNAc...) asparagine glycosylation is found at Asn-100, Asn-202, Asn-246, and Asn-293. Intrachain disulfides connect Cys-263–Cys-311 and Cys-353–Cys-403. Residues Asn-432, Asn-478, Asn-489, and Asn-504 are each glycosylated (N-linked (GlcNAc...) asparagine). A disulfide bond links Cys-447 and Cys-496. Residues Cys-538 and Cys-590 are joined by a disulfide bond. Short sequence motifs (cell attachment site) lie at residues 553–555 (RGD) and 562–564 (RGD). N-linked (GlcNAc...) asparagine glycans are attached at residues Asn-587 and Asn-670. Fibronectin type-III domains follow at residues 613-711 (PVPH…TPEA), 716-809 (NPVD…SGED), 811-916 (PQVS…PEGV), 919-1015 (HPEA…MALF), and 1014-1112 (LFGK…TGPV). The interval 697–724 (GEPSPVSESVVTPEAAPEKNPVDVRGEG) is disordered. A compositionally biased stretch (basic and acidic residues) spans 712 to 724 (APEKNPVDVRGEG). N-linked (GlcNAc...) asparagine glycosylation is found at Asn-725, Asn-776, Asn-824, Asn-848, Asn-875, Asn-968, Asn-978, Asn-1022, Asn-1030, Asn-1073, and Asn-1107. The chain crosses the membrane as a helical span at residues 1124 to 1146 (GWFIAFVSAIILLLLILLILCFI). The Cytoplasmic portion of the chain corresponds to 1147-1260 (KRSKGGKYSV…SPINPAVALE (114 aa)). A phosphoserine mark is found at Ser-1166, Ser-1181, Ser-1184, Ser-1197, Ser-1246, Ser-1247, and Ser-1251. Disordered regions lie at residues 1183–1210 (ESDN…SDDS) and 1229–1260 (IGQY…VALE). Positions 1244-1253 (NDSSGATSPI) are enriched in polar residues.

It belongs to the immunoglobulin superfamily. L1/neurofascin/NgCAM family. Interacts with SHTN1; the interaction occurs in axonal growth cones. Interacts with isoform 2 of BSG. In terms of tissue distribution, expressed in the brain, including in the molecular layer of the cerebellar cortex, the fiber-rich layers of the hippocampus (alveus, and strata lacunosum moleculare, radiatum, and oriens), the nerve fiber layer and the inner and outer plexiform layers of the retina, and in the molecular layer of the olfactory bulb (at protein level).

It localises to the cell membrane. Its subcellular location is the cell projection. The protein resides in the growth cone. In terms of biological role, neural cell adhesion molecule involved in the dynamics of cell adhesion and in the generation of transmembrane signals at tyrosine kinase receptors. During brain development, critical in multiple processes, including neuronal migration, axonal growth and fasciculation, and synaptogenesis. In the mature brain, plays a role in the dynamics of neuronal structure and function, including synaptic plasticity. The protein is Neural cell adhesion molecule L1 (L1cam) of Mus musculus (Mouse).